A 492-amino-acid chain; its full sequence is MTLWINGDWITGQGERRRKTNPVSAEILWQGNDANAAQVAEACQAARAAFPCWARQPFAARQAIVEKFAALLEAHKADLTEVIARETGKPRWEAATEVTAMINKIAISIKAYHARTGAQKSELVDGAATLRHRPHGVLAVFGPYNFPGHLPNGHIVPALLAGNTLIFKPSELTPWTGETVIKLWERAGLPAGVLNLVQGGRETGQALSSLDDLDGLLFTGSASTGYQLHRQLSGQPEKILALEMGGNNPLIIEDVANIDAAVHLTLQSAFITAGQRCTCARRLLVKQGAQGDAFLARLVDIAGRLQPGRWDDDPQPFIGGLISAQAAQHVMEAWRQREALGGRTLLAPRKVKEGTSLLTPGIIELTGVADVPDEEVFGPLLNVWRYAHFDEAIRLANNTRFGLSCGLVSTDRAQFEQLLLEARAGIVNWNKPLTGAASTAPFGGVGASGNHRPSAWYAADYCAWPMASLESPELTLPATLSPGLDFSRREAV.

220–225 contributes to the NAD(+) binding site; that stretch reads GSASTG. Residues E243 and C277 contribute to the active site.

The protein belongs to the aldehyde dehydrogenase family. AstD subfamily.

It carries out the reaction N-succinyl-L-glutamate 5-semialdehyde + NAD(+) + H2O = N-succinyl-L-glutamate + NADH + 2 H(+). It functions in the pathway amino-acid degradation; L-arginine degradation via AST pathway; L-glutamate and succinate from L-arginine: step 4/5. Its function is as follows. Catalyzes the NAD-dependent reduction of succinylglutamate semialdehyde into succinylglutamate. This chain is N-succinylglutamate 5-semialdehyde dehydrogenase, found in Salmonella paratyphi B (strain ATCC BAA-1250 / SPB7).